The chain runs to 279 residues: NAD-dependent protein deacylase (279 aa).

A Deacetylase sirtuin-type domain is found at 20–272; it reads RERLRQRIFF…PEFVEKLLKG (253 aa). 48 to 67 provides a ligand contact to NAD(+); that stretch reads GAGISAESGIRTFRAADGLW. 2 residues coordinate substrate: Tyr92 and Arg95. 129–132 serves as a coordination point for NAD(+); that stretch reads QNID. His147 serves as the catalytic Proton acceptor. Positions 155 and 174 each coordinate Zn(2+). Residues 214 to 216, 240 to 242, and Ala258 each bind NAD(+); these read GTS and NLE.

It belongs to the sirtuin family. Class III subfamily. In terms of assembly, forms a 1:1 complex with acetyl-CoA synthetase (Acs). Zn(2+) serves as cofactor.

The protein resides in the cytoplasm. It carries out the reaction N(6)-acetyl-L-lysyl-[protein] + NAD(+) + H2O = 2''-O-acetyl-ADP-D-ribose + nicotinamide + L-lysyl-[protein]. The catalysed reaction is N(6)-succinyl-L-lysyl-[protein] + NAD(+) + H2O = 2''-O-succinyl-ADP-D-ribose + nicotinamide + L-lysyl-[protein]. It catalyses the reaction N(6)-(2-hydroxyisobutanoyl)-L-lysyl-[protein] + NAD(+) + H2O = 2''-O-(2-hydroxyisobutanoyl)-ADP-D-ribose + nicotinamide + L-lysyl-[protein]. Its activity is regulated as follows. Deacetylation is inhibited by nicotinamide. Functionally, NAD-dependent lysine deacetylase that specifically removes acetyl groups on target proteins. Also acts as a protein-lysine deacylase by mediating protein desuccinylation and de-2-hydroxyisobutyrylation. Modulates the activities of several proteins which are inactive in their acylated form. Activates the enzyme acetyl-CoA synthetase (acs) by deacetylating 'Lys-609' in the inactive, acetylated form of the enzyme. May also modulate the activity of other propionyl-adenosine monophosphate (AMP)-forming enzymes. The protein is NAD-dependent protein deacylase of Escherichia coli (strain K12).